The chain runs to 323 residues: Thiamine-monophosphate kinase (323 aa).

4 residues coordinate Mg(2+): D30, S45, T46, and D47. H54 lines the substrate pocket. Mg(2+) is bound by residues D75 and D122. Residues 121–122 (GD) and R146 each bind ATP. D212 contacts Mg(2+). S214 contributes to the ATP binding site. D215 is a Mg(2+) binding site. Substrate contacts are provided by E263 and F319.

Belongs to the thiamine-monophosphate kinase family.

It catalyses the reaction thiamine phosphate + ATP = thiamine diphosphate + ADP. Its pathway is cofactor biosynthesis; thiamine diphosphate biosynthesis; thiamine diphosphate from thiamine phosphate: step 1/1. Catalyzes the ATP-dependent phosphorylation of thiamine-monophosphate (TMP) to form thiamine-pyrophosphate (TPP), the active form of vitamin B1. This is Thiamine-monophosphate kinase from Buchnera aphidicola subsp. Schizaphis graminum (strain Sg).